Consider the following 1208-residue polypeptide: Lysine-specific demethylase JMJ17 (1208 aa).

The PHD-type 1; degenerate zinc-finger motif lies at 1 to 36; the sequence is MLLCDSCNKGWHIYCLSPPLKHIPLGNWYCLECLNT. Residues Cys-4, Cys-7, Cys-30, and Cys-33 each contribute to the Zn(2+) site. One can recognise a JmjC domain in the interval 126 to 292; that stretch reads EYCGSPWNLN…YGGSGAELYR (167 aa). Positions 172, 174, and 260 each coordinate Fe cation. Zn(2+) contacts are provided by Cys-369, Cys-372, Cys-383, Cys-385, Cys-392, His-395, Cys-400, and Cys-402. A C5HC2 zinc finger spans residues 369-421; sequence CIICQQFLHLSAIVCNCRPSVFACLEHWKHLCECEPTKLRLEYRYTLAELDMM. A Nuclear localization signal motif is present at residues 613–620; the sequence is SKKISSAK. Residues 1099-1145 form a PHD-type 2 zinc finger; it reads MLHCICLKPYNSRSMVSCSQCGEWYHTYCLKLHWRPKAYVCSACCPL. Zn(2+)-binding residues include Cys-1102, Cys-1104, Cys-1116, Cys-1119, His-1124, Cys-1127, Cys-1139, and Cys-1142.

Belongs to the JARID1 histone demethylase family. Requires Fe(2+) as cofactor. As to expression, expressed in inflorescences, roots, seedlings and siliques, and, at low levels, in leaves and stems.

The protein localises to the nucleus. It catalyses the reaction N(6),N(6),N(6)-trimethyl-L-lysyl(4)-[histone H3] + 2-oxoglutarate + O2 = N(6),N(6)-dimethyl-L-lysyl(4)-[histone H3] + formaldehyde + succinate + CO2. The enzyme catalyses N(6),N(6)-dimethyl-L-lysyl(4)-[histone H3] + 2-oxoglutarate + O2 = N(6)-methyl-L-lysyl(4)-[histone H3] + formaldehyde + succinate + CO2. The catalysed reaction is N(6)-methyl-L-lysyl(4)-[histone H3] + 2-oxoglutarate + O2 = L-lysyl(4)-[histone H3] + formaldehyde + succinate + CO2. It carries out the reaction N(6),N(6),N(6)-trimethyl-L-lysyl(4)-[histone H3] + 3 2-oxoglutarate + 3 O2 = L-lysyl(4)-[histone H3] + 3 formaldehyde + 3 succinate + 3 CO2. Functionally, functions as a histone H3 'Lys-4' (H3K4me) demethylase involved in the regulation of gene expression. Active on H3K4me1, H3K4me2 and H3K4me3. Repressor of the abscisic acid (ABA) signaling pathway, especially during stomatal closure regulation. Negative regulator of responses to dehydration stress by binding directly to the chromatin of SRK2E/OST1 and demethylating H3K4me3 to regulates its expression. Together with JMJ14 and JMJ16, required for plant growth and development. In Arabidopsis thaliana (Mouse-ear cress), this protein is Lysine-specific demethylase JMJ17.